A 131-amino-acid chain; its full sequence is Large-conductance mechanosensitive channel (131 aa).

The next 3 helical transmembrane spans lie at 14-34 (IMDLAIGVVIGGAFGKIVTSL), 38-58 (IIMPLVGLLLGGLDFSGLAVT), and 67-87 (GSFIQTIVNFFIISFSIFIVI).

This sequence belongs to the MscL family. Homopentamer.

Its subcellular location is the cell membrane. Functionally, channel that opens in response to stretch forces in the membrane lipid bilayer. May participate in the regulation of osmotic pressure changes within the cell. In Bacillus velezensis (strain DSM 23117 / BGSC 10A6 / LMG 26770 / FZB42) (Bacillus amyloliquefaciens subsp. plantarum), this protein is Large-conductance mechanosensitive channel.